The chain runs to 122 residues: UPF0145 protein BceJ2315_57450 (122 aa).

It belongs to the UPF0145 family.

This chain is UPF0145 protein BceJ2315_57450, found in Burkholderia cenocepacia (strain ATCC BAA-245 / DSM 16553 / LMG 16656 / NCTC 13227 / J2315 / CF5610) (Burkholderia cepacia (strain J2315)).